A 620-amino-acid chain; its full sequence is 1-deoxy-D-xylulose-5-phosphate synthase (620 aa).

Thiamine diphosphate contacts are provided by residues H80 and 121–123 (GHS). D152 contacts Mg(2+). Thiamine diphosphate contacts are provided by residues 153–154 (GA), N181, Y288, and E370. N181 contributes to the Mg(2+) binding site.

The protein belongs to the transketolase family. DXPS subfamily. In terms of assembly, homodimer. The cofactor is Mg(2+). Thiamine diphosphate serves as cofactor.

It carries out the reaction D-glyceraldehyde 3-phosphate + pyruvate + H(+) = 1-deoxy-D-xylulose 5-phosphate + CO2. The protein operates within metabolic intermediate biosynthesis; 1-deoxy-D-xylulose 5-phosphate biosynthesis; 1-deoxy-D-xylulose 5-phosphate from D-glyceraldehyde 3-phosphate and pyruvate: step 1/1. Catalyzes the acyloin condensation reaction between C atoms 2 and 3 of pyruvate and glyceraldehyde 3-phosphate to yield 1-deoxy-D-xylulose-5-phosphate (DXP). This is 1-deoxy-D-xylulose-5-phosphate synthase from Shigella boydii serotype 18 (strain CDC 3083-94 / BS512).